Consider the following 198-residue polypeptide: Syndecan-4 (198 aa).

Residues 1–18 (MAPARLFALLLLFVGGVA) form the signal peptide. The Extracellular portion of the chain corresponds to 19-145 (ESIRETEVID…QGSNIFERTE (127 aa)). O-linked (Xyl...) (glycosaminoglycan) serine glycosylation is found at Ser39, Ser61, and Ser63. Ser95 carries O-linked (Xyl...) (chondroitin sulfate) serine glycosylation. Residues 146–170 (VLAALIVGGIVGILFAVFLILLLMY) form a helical membrane-spanning segment. Over 171-198 (RMKKKDEGSYDLGKKPIYKKAPTNEFYA) the chain is Cytoplasmic.

It belongs to the syndecan proteoglycan family. In terms of assembly, homodimer. Interacts with CDCP1 and SDCBP. Interacts (via its cytoplasmic domain) with GIPC (via its PDZ domain). Interacts (via its cytoplasmic domain) with NUDT16L1. Interacts with DNM2; this interaction is markedly enhanced at focal ahesion site upon induction of focal adhesions and stress-fiber formation. In terms of processing, shedding is enhanced by a number of factors such as heparanase, thrombin or EGF. Also by stress and wound healing. PMA-mediated shedding is inhibited by TIMP3. O-glycosylated; contains both chondroitin sulfate and heparan sulfate. Ser-39, Ser-61 and Ser-63 can all be modified by either chondroitin sulfate or heparan sulfate, and the protein exists in forms that contain only chondroitin sulfate, only heparan sulfate and both chondroitin sulfate and heparan sulfate.

It localises to the membrane. The protein localises to the secreted. Functionally, cell surface proteoglycan which regulates exosome biogenesis in concert with SDCBP and PDCD6IP. This chain is Syndecan-4, found in Pongo abelii (Sumatran orangutan).